Reading from the N-terminus, the 445-residue chain is Tubulin beta-4 chain (445 aa).

The MREI motif signature appears at 1–4 (MREI). GTP is bound by residues Gln11, Glu69, Ser138, Gly142, Thr143, Gly144, Asn204, and Asn226. Mg(2+) is bound at residue Glu69. Residues 425–445 (YQDATAEEEGEFEEGEEEENA) form a disordered region. A compositionally biased stretch (acidic residues) spans 429 to 445 (TAEEEGEFEEGEEEENA). Glu438 carries the 5-glutamyl polyglutamate modification.

This sequence belongs to the tubulin family. Dimer of alpha and beta chains. A typical microtubule is a hollow water-filled tube with an outer diameter of 25 nm and an inner diameter of 15 nM. Alpha-beta heterodimers associate head-to-tail to form protofilaments running lengthwise along the microtubule wall with the beta-tubulin subunit facing the microtubule plus end conferring a structural polarity. Microtubules usually have 13 protofilaments but different protofilament numbers can be found in some organisms and specialized cells. Mg(2+) serves as cofactor. Post-translationally, some glutamate residues at the C-terminus are polyglycylated, resulting in polyglycine chains on the gamma-carboxyl group. Glycylation is mainly limited to tubulin incorporated into axonemes (cilia and flagella) whereas glutamylation is prevalent in neuronal cells, centrioles, axonemes, and the mitotic spindle. Both modifications can coexist on the same protein on adjacent residues, and lowering polyglycylation levels increases polyglutamylation, and reciprocally. The precise function of polyglycylation is still unclear. In terms of processing, some glutamate residues at the C-terminus are polyglutamylated, resulting in polyglutamate chains on the gamma-carboxyl group. Polyglutamylation plays a key role in microtubule severing by spastin (SPAST). SPAST preferentially recognizes and acts on microtubules decorated with short polyglutamate tails: severing activity by SPAST increases as the number of glutamates per tubulin rises from one to eight, but decreases beyond this glutamylation threshold. Preferential expression in germ cells.

The protein localises to the cytoplasm. Its subcellular location is the cytoskeleton. Tubulin is the major constituent of microtubules, a cylinder consisting of laterally associated linear protofilaments composed of alpha- and beta-tubulin heterodimers. Microtubules grow by the addition of GTP-tubulin dimers to the microtubule end, where a stabilizing cap forms. Below the cap, tubulin dimers are in GDP-bound state, owing to GTPase activity of alpha-tubulin. The sequence is that of Tubulin beta-4 chain (tubb4) from Xenopus laevis (African clawed frog).